The sequence spans 745 residues: Multiple C2 domain and transmembrane region protein 13 (745 aa).

The tract at residues 1-30 is disordered; the sequence is MAANKDEFSVKQISPKLGGERGARNPYGPT. C2 domains follow at residues 21–139, 171–293, and 326–453; these read RGAR…PQRY, DASE…SAPA, and AEES…ACSY. The Ca(2+) site is built by Asp56, Asp61, Asp106, and Asn110. 2 consecutive transmembrane segments (helical) span residues 568-588 and 688-708; these read SLIV…LVGL and FYCW…PMWL.

This sequence belongs to the MCTP family. Ca(2+) is required as a cofactor. Expressed in incipient leaf primordia.

It localises to the cell membrane. It is found in the cytoplasm. Functionally, may function as a signaling molecule by regulating the trafficking of other regulators. In Arabidopsis thaliana (Mouse-ear cress), this protein is Multiple C2 domain and transmembrane region protein 13.